A 217-amino-acid polypeptide reads, in one-letter code: Probable transaldolase (217 aa).

The Schiff-base intermediate with substrate role is filled by K83.

It belongs to the transaldolase family. Type 3B subfamily.

Its subcellular location is the cytoplasm. The enzyme catalyses D-sedoheptulose 7-phosphate + D-glyceraldehyde 3-phosphate = D-erythrose 4-phosphate + beta-D-fructose 6-phosphate. It participates in carbohydrate degradation; pentose phosphate pathway; D-glyceraldehyde 3-phosphate and beta-D-fructose 6-phosphate from D-ribose 5-phosphate and D-xylulose 5-phosphate (non-oxidative stage): step 2/3. Functionally, transaldolase is important for the balance of metabolites in the pentose-phosphate pathway. This chain is Probable transaldolase (tal), found in Aquifex aeolicus (strain VF5).